The following is a 386-amino-acid chain: Epoxyqueuosine reductase (386 aa).

Residues arginine 57, cysteine 97, aspartate 134, 139-141 (SDR), serine 152, asparagine 155, isoleucine 158, and leucine 169 contribute to the cob(II)alamin site. The active-site Proton donor is aspartate 134. One can recognise a 4Fe-4S ferredoxin-type domain in the interval 178–208 (FEPDVPIEDMCGSCTKCLDACPTGALVNPGQ). The [4Fe-4S] cluster site is built by cysteine 188, cysteine 191, cysteine 194, cysteine 198, and cysteine 214. Residue serine 216 coordinates cob(II)alamin. TRNA-binding residues include glutamine 220 and lysine 222. [4Fe-4S] cluster-binding residues include cysteine 240, cysteine 243, and cysteine 247. Cob(II)alamin is bound at residue 240-241 (CD). TRNA-binding residues include asparagine 280, arginine 281, arginine 295, lysine 297, and lysine 298. The HEAT-like PBS-type repeat unit spans residues 333–357 (RGTAAWAIGKIGDPAYAEELEKALE).

Belongs to the QueG family. In terms of assembly, monomer. Requires cob(II)alamin as cofactor. [4Fe-4S] cluster serves as cofactor.

It is found in the cytoplasm. It carries out the reaction epoxyqueuosine(34) in tRNA + AH2 = queuosine(34) in tRNA + A + H2O. It functions in the pathway tRNA modification; tRNA-queuosine biosynthesis. Catalyzes the conversion of epoxyqueuosine (oQ) to queuosine (Q), which is a hypermodified base found in the wobble positions of tRNA(Asp), tRNA(Asn), tRNA(His) and tRNA(Tyr). The sequence is that of Epoxyqueuosine reductase from Bacillus subtilis (strain 168).